Consider the following 340-residue polypeptide: Anthranilate phosphoribosyltransferase (340 aa).

Residues G81, 84–85, T89, 91–94, 109–117, and A121 each bind 5-phospho-alpha-D-ribose 1-diphosphate; these read GD, NIST, and KHGNRNLSS. Position 81 (G81) interacts with anthranilate. A Mg(2+)-binding site is contributed by S93. N112 lines the anthranilate pocket. Anthranilate is bound at residue R167. The Mg(2+) site is built by D226 and E227.

The protein belongs to the anthranilate phosphoribosyltransferase family. As to quaternary structure, homodimer. It depends on Mg(2+) as a cofactor.

The enzyme catalyses N-(5-phospho-beta-D-ribosyl)anthranilate + diphosphate = 5-phospho-alpha-D-ribose 1-diphosphate + anthranilate. The protein operates within amino-acid biosynthesis; L-tryptophan biosynthesis; L-tryptophan from chorismate: step 2/5. Catalyzes the transfer of the phosphoribosyl group of 5-phosphorylribose-1-pyrophosphate (PRPP) to anthranilate to yield N-(5'-phosphoribosyl)-anthranilate (PRA). In Ruegeria sp. (strain TM1040) (Silicibacter sp.), this protein is Anthranilate phosphoribosyltransferase.